The following is a 450-amino-acid chain: Glucose-6-phosphate isomerase (450 aa).

Glutamate 290 (proton donor) is an active-site residue. Residues histidine 311 and lysine 425 contribute to the active site.

Belongs to the GPI family.

It localises to the cytoplasm. It carries out the reaction alpha-D-glucose 6-phosphate = beta-D-fructose 6-phosphate. It functions in the pathway carbohydrate biosynthesis; gluconeogenesis. The protein operates within carbohydrate degradation; glycolysis; D-glyceraldehyde 3-phosphate and glycerone phosphate from D-glucose: step 2/4. Catalyzes the reversible isomerization of glucose-6-phosphate to fructose-6-phosphate. The chain is Glucose-6-phosphate isomerase from Lactiplantibacillus plantarum (strain ATCC BAA-793 / NCIMB 8826 / WCFS1) (Lactobacillus plantarum).